The sequence spans 279 residues: Phosphatidylglycerol--prolipoprotein diacylglyceryl transferase (279 aa).

The next 7 helical transmembrane spans lie at 14 to 34 (IAFS…ACAI), 62 to 82 (YFLW…ILIY), 106 to 126 (FVGI…IASY), 136 to 156 (LLIY…FGRI), 190 to 210 (PSQL…VMWA), 218 to 238 (GLLI…AEFY), and 252 to 272 (LSMG…ILLY). Position 155 (R155) interacts with a 1,2-diacyl-sn-glycero-3-phospho-(1'-sn-glycerol).

This sequence belongs to the Lgt family.

It localises to the cell inner membrane. It catalyses the reaction L-cysteinyl-[prolipoprotein] + a 1,2-diacyl-sn-glycero-3-phospho-(1'-sn-glycerol) = an S-1,2-diacyl-sn-glyceryl-L-cysteinyl-[prolipoprotein] + sn-glycerol 1-phosphate + H(+). The protein operates within protein modification; lipoprotein biosynthesis (diacylglyceryl transfer). In terms of biological role, catalyzes the transfer of the diacylglyceryl group from phosphatidylglycerol to the sulfhydryl group of the N-terminal cysteine of a prolipoprotein, the first step in the formation of mature lipoproteins. The polypeptide is Phosphatidylglycerol--prolipoprotein diacylglyceryl transferase (Helicobacter pylori (strain HPAG1)).